Consider the following 241-residue polypeptide: Anti-Pycsar protein Apyc1 (241 aa).

Residues 17–215 (DNNNALLEQD…SVQKKTWLMH (199 aa)) are beta-lactamase-like. Zn(2+)-binding residues include His59, His61, Asp63, His64, His142, Asp162, and His215.

The protein belongs to the nuclease anti-Pycsar protein Apyc1 family. As to quaternary structure, homodimer. Requires Zn(2+) as cofactor.

The enzyme catalyses 3',5'-cyclic CMP + H2O = CMP + H(+). It carries out the reaction 3',5'-cyclic UMP + H2O = UMP + H(+). In terms of biological role, counteracts the endogenous Pycsar antiviral defense system. Phosphodiesterase that enables metal-dependent hydrolysis of host cyclic nucleotide Pycsar defense signals such as cCMP and cUMP. This chain is Anti-Pycsar protein Apyc1, found in Paenibacillus harenae.